Consider the following 112-residue polypeptide: uncharacterized protein (112 aa).

This is an uncharacterized protein from Gallus gallus (Chicken).